A 124-amino-acid polypeptide reads, in one-letter code: Small ribosomal subunit protein uS12cz/uS12cy (124 aa).

The protein belongs to the universal ribosomal protein uS12 family. Part of the 30S ribosomal subunit.

Its subcellular location is the plastid. It is found in the chloroplast. Functionally, with S4 and S5 plays an important role in translational accuracy. Located at the interface of the 30S and 50S subunits. In Agrostis stolonifera (Creeping bentgrass), this protein is Small ribosomal subunit protein uS12cz/uS12cy (rps12-A).